Consider the following 447-residue polypeptide: MCKPQQKHYGRQVMNTQNSLKQVATATMVGTAIEYFDNYIYAMAAVLVFNHQFFHAVDPLSGQIAALSTLALTFIARPLGAILFGHFGDRFGRKNTFVMSLLLMGISTVVIGLLPTYDSIGIWATILLCLCRIGQGIGLGGEWGGAALVAVENAPEGKRGWYGTFPQLGAPLGLLLANGVFLGITAIFGQEAMTEWAWRIPFLSSVILVAIGLYVRLKLTEAPIFLAALNKPKPKRLPMLEVVTTHFKPFFLGMLVCIAGYVLFYIMIAFSQIYAKSAPTVSEAGYAMGLGFSPQIFTALLMASAVSLAITIAASGKYIDKIGRRTWLIWTTVGVAIFGLSLPLFLENGTTTSLFWFLFIGMGLIGMGYGPLASFLPELFPTHARYSGASLTYNIAGLFGASVAAIIALPLNAHYGLKGVGIYLTLNAVLSLVGLWFISETKDKLLS.

At 1–28 the chain is on the cytoplasmic side; the sequence is MCKPQQKHYGRQVMNTQNSLKQVATATM. Residues 29–49 traverse the membrane as a helical segment; the sequence is VGTAIEYFDNYIYAMAAVLVF. Topologically, residues 50 to 63 are periplasmic; the sequence is NHQFFHAVDPLSGQ. A helical membrane pass occupies residues 64-84; that stretch reads IAALSTLALTFIARPLGAILF. The Cytoplasmic segment spans residues 85-96; the sequence is GHFGDRFGRKNT. A helical transmembrane segment spans residues 97–117; sequence FVMSLLLMGISTVVIGLLPTY. Residues 118 to 119 are Periplasmic-facing; it reads DS. The chain crosses the membrane as a helical span at residues 120 to 140; it reads IGIWATILLCLCRIGQGIGLG. Residues 141-167 are Cytoplasmic-facing; it reads GEWGGAALVAVENAPEGKRGWYGTFPQ. A helical membrane pass occupies residues 168 to 188; sequence LGAPLGLLLANGVFLGITAIF. Residues 189–194 lie on the Periplasmic side of the membrane; that stretch reads GQEAMT. A helical transmembrane segment spans residues 195-215; sequence EWAWRIPFLSSVILVAIGLYV. The Cytoplasmic segment spans residues 216–249; the sequence is RLKLTEAPIFLAALNKPKPKRLPMLEVVTTHFKP. Residues 250 to 270 form a helical membrane-spanning segment; sequence FFLGMLVCIAGYVLFYIMIAF. At 271–295 the chain is on the periplasmic side; it reads SQIYAKSAPTVSEAGYAMGLGFSPQ. The chain crosses the membrane as a helical span at residues 296–316; the sequence is IFTALLMASAVSLAITIAASG. The Cytoplasmic segment spans residues 317–325; sequence KYIDKIGRR. A helical transmembrane segment spans residues 326-346; it reads TWLIWTTVGVAIFGLSLPLFL. Residues 347–354 are Periplasmic-facing; it reads ENGTTTSL. The helical transmembrane segment at 355–375 threads the bilayer; it reads FWFLFIGMGLIGMGYGPLASF. Residues 376-390 are Cytoplasmic-facing; the sequence is LPELFPTHARYSGAS. The chain crosses the membrane as a helical span at residues 391 to 411; that stretch reads LTYNIAGLFGASVAAIIALPL. The Periplasmic segment spans residues 412–418; the sequence is NAHYGLK. A helical transmembrane segment spans residues 419-439; sequence GVGIYLTLNAVLSLVGLWFIS. Over 440–447 the chain is Cytoplasmic; it reads ETKDKLLS.

This sequence belongs to the major facilitator superfamily. Metabolite:H+ Symporter (MHS) family (TC 2.A.1.6) family.

It localises to the cell inner membrane. In Haemophilus influenzae (strain ATCC 51907 / DSM 11121 / KW20 / Rd), this protein is Putative metabolite transport protein HI_0418.